Here is a 1366-residue protein sequence, read N- to C-terminus: DNA-directed RNA polymerase subunit beta' (1366 aa).

Positions 1-20 are enriched in basic residues; it reads MTSSKPKKTSRVRKTTKNSK. Residues 1–34 are disordered; that stretch reads MTSSKPKKTSRVRKTTKNSKKNNPLTMPALAKTP. Zn(2+) is bound by residues Cys-248, Cys-315, Cys-322, and Cys-325. The disordered stretch occupies residues 1291–1366; sequence YTVDMPQSPS…LQEEGLLSDE (76 aa). The span at 1295 to 1305 shows a compositional bias: polar residues; sequence MPQSPSVSSTA. Positions 1354 to 1366 are enriched in low complexity; sequence LEGLQEEGLLSDE.

The protein belongs to the RNA polymerase beta' chain family. RpoC2 subfamily. In cyanobacteria the RNAP catalytic core is composed of 2 alpha, 1 beta, 1 beta', 1 gamma and 1 omega subunit. When a sigma factor is associated with the core the holoenzyme is formed, which can initiate transcription. Zn(2+) serves as cofactor.

The catalysed reaction is RNA(n) + a ribonucleoside 5'-triphosphate = RNA(n+1) + diphosphate. DNA-dependent RNA polymerase catalyzes the transcription of DNA into RNA using the four ribonucleoside triphosphates as substrates. The polypeptide is DNA-directed RNA polymerase subunit beta' (Prochlorococcus marinus (strain MIT 9301)).